Here is a 550-residue protein sequence, read N- to C-terminus: Chaperonin GroEL (550 aa).

Residues 30 to 33, lysine 51, 87 to 91, glycine 415, 479 to 481, and aspartate 495 each bind ATP; these read TLGP, DGTTT, and NAA.

It belongs to the chaperonin (HSP60) family. As to quaternary structure, forms a cylinder of 14 subunits composed of two heptameric rings stacked back-to-back. Interacts with the co-chaperonin GroES.

The protein resides in the cytoplasm. It catalyses the reaction ATP + H2O + a folded polypeptide = ADP + phosphate + an unfolded polypeptide.. Together with its co-chaperonin GroES, plays an essential role in assisting protein folding. The GroEL-GroES system forms a nano-cage that allows encapsulation of the non-native substrate proteins and provides a physical environment optimized to promote and accelerate protein folding. The protein is Chaperonin GroEL of Polaromonas sp. (strain JS666 / ATCC BAA-500).